The sequence spans 84 residues: Small ribosomal subunit protein uS17 (84 aa).

This sequence belongs to the universal ribosomal protein uS17 family. In terms of assembly, part of the 30S ribosomal subunit.

Functionally, one of the primary rRNA binding proteins, it binds specifically to the 5'-end of 16S ribosomal RNA. In Clostridium perfringens (strain SM101 / Type A), this protein is Small ribosomal subunit protein uS17.